The sequence spans 151 residues: Kinetoplast-associated protein 1 (151 aa).

The propeptide occupies 1-9; the sequence is MLRVSVRSL. Residues 13–151 form a disordered region; sequence ASSKAGSKAA…KKGAAKKAHK (139 aa). Low complexity-rich tracts occupy residues 15-49, 70-91, and 101-111; these read SKAG…VPPV, AAAA…TPAK, and SKPSAPKQAAG. Positions 112 to 151 are enriched in basic residues; the sequence is KMRKAAGKAQRKIKAAARKAAPKKMAKSFGKKGAAKKAHK.

It belongs to the KAP family. As to quaternary structure, associates with the kinetoplast DNA network.

It is found in the mitochondrion matrix. The protein resides in the kinetoplast. Its function is as follows. Histone H1-like DNA-binding protein involved in the organization and segregation of kinetoplast DNA (kDNA). The mitochondrial DNA of kinetoplastid protozoa consists of about 5,000 minicircles and 20 to 30 maxicircles. These circular DNAs are held together by catenation into a highly organized compact disk structure referred to as a kinetoplast DNA (kDNA) network. Binds preferentially to a specific fragment of minicircle DNA and is able to compact kDNA networks through DNA charge neutralization and condensation. In Crithidia fasciculata, this protein is Kinetoplast-associated protein 1 (KAP4).